A 2430-amino-acid chain; its full sequence is DNA-directed RNA polymerase subunit beta'' (2430 aa).

Zn(2+) is bound by residues Cys-336, Cys-455, Cys-462, and Cys-465.

Belongs to the RNA polymerase beta' chain family. RpoC2 subfamily. In plastids the minimal PEP RNA polymerase catalytic core is composed of four subunits: alpha, beta, beta', and beta''. When a (nuclear-encoded) sigma factor is associated with the core the holoenzyme is formed, which can initiate transcription. The cofactor is Zn(2+).

It is found in the plastid. It localises to the chloroplast. It carries out the reaction RNA(n) + a ribonucleoside 5'-triphosphate = RNA(n+1) + diphosphate. DNA-dependent RNA polymerase catalyzes the transcription of DNA into RNA using the four ribonucleoside triphosphates as substrates. The chain is DNA-directed RNA polymerase subunit beta'' from Stigeoclonium helveticum (Green alga).